A 190-amino-acid polypeptide reads, in one-letter code: Putative manganese efflux pump MntP (190 aa).

The next 6 membrane-spanning stretches (helical) occupy residues 3–23, 41–61, 69–89, 105–125, 133–153, and 168–188; these read PISL…AALG, LIFG…GQVA, DHWI…YNGL, FWIL…VGVG, IMVA…IGVM, and IVGG…HLTA.

It belongs to the MntP (TC 9.B.29) family.

It is found in the cell inner membrane. Its function is as follows. Probably functions as a manganese efflux pump. In Pseudomonas syringae pv. tomato (strain ATCC BAA-871 / DC3000), this protein is Putative manganese efflux pump MntP.